The following is a 567-amino-acid chain: 2-succinyl-5-enolpyruvyl-6-hydroxy-3-cyclohexene-1-carboxylate synthase (567 aa).

This sequence belongs to the TPP enzyme family. MenD subfamily. In terms of assembly, homodimer. Mg(2+) serves as cofactor. The cofactor is Mn(2+). It depends on thiamine diphosphate as a cofactor.

It catalyses the reaction isochorismate + 2-oxoglutarate + H(+) = 5-enolpyruvoyl-6-hydroxy-2-succinyl-cyclohex-3-ene-1-carboxylate + CO2. The protein operates within quinol/quinone metabolism; 1,4-dihydroxy-2-naphthoate biosynthesis; 1,4-dihydroxy-2-naphthoate from chorismate: step 2/7. It participates in quinol/quinone metabolism; menaquinone biosynthesis. Its function is as follows. Catalyzes the thiamine diphosphate-dependent decarboxylation of 2-oxoglutarate and the subsequent addition of the resulting succinic semialdehyde-thiamine pyrophosphate anion to isochorismate to yield 2-succinyl-5-enolpyruvyl-6-hydroxy-3-cyclohexene-1-carboxylate (SEPHCHC). The sequence is that of 2-succinyl-5-enolpyruvyl-6-hydroxy-3-cyclohexene-1-carboxylate synthase from Yersinia pestis bv. Antiqua (strain Angola).